The following is a 94-amino-acid chain: Defensin-like protein 21 (94 aa).

An N-terminal signal peptide occupies residues 1–26 (MVRTNVVSFVLFAAIVLCIGSIQIDG). 4 disulfides stabilise this stretch: C41–C92, C51–C79, C65–C88, and C69–C90.

Belongs to the DEFL family.

It localises to the secreted. The protein is Defensin-like protein 21 of Arabidopsis thaliana (Mouse-ear cress).